The chain runs to 125 residues: UPF0325 protein Ping_0715 (125 aa).

Belongs to the UPF0325 family.

This is UPF0325 protein Ping_0715 from Psychromonas ingrahamii (strain DSM 17664 / CCUG 51855 / 37).